The chain runs to 219 residues: Small ribosomal subunit protein uS19 (219 aa).

The interval 1 to 128 (MGFKGAWNKR…YEEIYAQYKQ (128 aa)) is unknown. The small ribosomal subunit protein uS19 stretch occupies residues 129-219 (MTEKKAYVDP…DKTAKVVKKK (91 aa)).

The protein belongs to the universal ribosomal protein uS19 family.

In terms of biological role, protein S19 forms a complex with S13 that binds strongly to the 16S ribosomal RNA. This Aquifex pyrophilus protein is Small ribosomal subunit protein uS19.